A 407-amino-acid chain; its full sequence is uncharacterized protein (407 aa).

The next 11 helical transmembrane spans lie at 13 to 30, 40 to 62, 67 to 89, 118 to 140, 147 to 169, 179 to 199, 253 to 271, 281 to 303, 334 to 356, 361 to 378, and 385 to 402; these read IVFT…SPFL, VTPL…YYVL, ILGM…YNII, LAFA…VFSG, VYER…IRRL, AVGL…YYNY, WISG…SVFV, TEII…FGPL, GYLI…EIIA, AFAF…LVSF, and QFLV…IVLF.

The protein resides in the cell membrane. This is an uncharacterized protein from Aquifex aeolicus (strain VF5).